Reading from the N-terminus, the 728-residue chain is Catalase-peroxidase (728 aa).

Positions 97–225 (WHSAGTYRIA…LAAVMMGLIY (129 aa)) form a cross-link, tryptophyl-tyrosyl-methioninium (Trp-Tyr) (with M-251). His-98 acts as the Proton acceptor in catalysis. The segment at residues 225–251 (YVNPEGVDGNPDPLRTAQDIRITFARM) is a cross-link (tryptophyl-tyrosyl-methioninium (Tyr-Met) (with W-97)). His-266 lines the heme b pocket.

It belongs to the peroxidase family. Peroxidase/catalase subfamily. As to quaternary structure, homodimer or homotetramer. It depends on heme b as a cofactor. Formation of the three residue Trp-Tyr-Met cross-link is important for the catalase, but not the peroxidase activity of the enzyme.

The enzyme catalyses H2O2 + AH2 = A + 2 H2O. It carries out the reaction 2 H2O2 = O2 + 2 H2O. Its function is as follows. Bifunctional enzyme with both catalase and broad-spectrum peroxidase activity. This Shewanella putrefaciens (strain CN-32 / ATCC BAA-453) protein is Catalase-peroxidase.